Here is a 160-residue protein sequence, read N- to C-terminus: Endoribonuclease YbeY (160 aa).

Positions 112, 116, and 122 each coordinate Zn(2+).

The protein belongs to the endoribonuclease YbeY family. Requires Zn(2+) as cofactor.

It localises to the cytoplasm. Functionally, single strand-specific metallo-endoribonuclease involved in late-stage 70S ribosome quality control and in maturation of the 3' terminus of the 16S rRNA. The chain is Endoribonuclease YbeY from Maricaulis maris (strain MCS10) (Caulobacter maris).